A 672-amino-acid polypeptide reads, in one-letter code: Spermatid perinuclear RNA-binding protein (672 aa).

One can recognise a DZF domain in the interval 5 to 363 (RSFANDDRHV…ALKRPFEDGL (359 aa)). Disordered stretches follow at residues 52 to 73 (TNKG…GENY) and 349 to 371 (GAGS…DPNK). Basic and acidic residues predominate over residues 357–371 (RPFEDGLGDDKDPNK). In terms of domain architecture, DRBM 1 spans 387–453 (DLMNALMRLN…AVKVLQAMGY (67 aa)). Positions 466-476 (SDEKSDNESKN) are enriched in basic and acidic residues. The interval 466 to 499 (SDEKSDNESKNETVSSNSSNNTGNSTTETSSTLE) is disordered. Positions 477–497 (ETVSSNSSNNTGNSTTETSST) are enriched in low complexity. Positions 510-576 (SGKNPVMELN…ALAALEKLFS (67 aa)) constitute a DRBM 2 domain. 2 positions are modified to asymmetric dimethylarginine: Arg612 and Arg617.

In terms of assembly, interacts with EIF2AK2. Associates with microtubules; it is unsure whether such interaction is direct or indirect.

Its subcellular location is the cytoplasm. Involved in spermatogenesis and sperm function. Plays a role in regulation of cell growth. Binds to double-stranded DNA and RNA. Binds most efficiently to poly(I:C) RNA than to poly(dI:dC) DNA. Binds also to single-stranded poly(G) RNA. Binds non-specifically to the mRNA PRM1 3'-UTR and adenovirus VA RNA. The chain is Spermatid perinuclear RNA-binding protein (STRBP) from Homo sapiens (Human).